Consider the following 230-residue polypeptide: A-type ATP synthase subunit D (230 aa).

A disordered region spans residues 204-230 (AKKEEEEDALAAEEEAEEEPEAVTADD). Residues 208–230 (EEEDALAAEEEAEEEPEAVTADD) are compositionally biased toward acidic residues.

This sequence belongs to the V-ATPase D subunit family. As to quaternary structure, has multiple subunits with at least A(3), B(3), C, D, E, F, H, I and proteolipid K(x).

It localises to the cell membrane. In terms of biological role, component of the A-type ATP synthase that produces ATP from ADP in the presence of a proton gradient across the membrane. This Haloarcula marismortui (strain ATCC 43049 / DSM 3752 / JCM 8966 / VKM B-1809) (Halobacterium marismortui) protein is A-type ATP synthase subunit D.